A 485-amino-acid chain; its full sequence is tRNA sulfurtransferase (485 aa).

Residues 63-167 (DKLVERLSCM…NELLYLVTAI (105 aa)) enclose the THUMP domain. ATP contacts are provided by residues 185 to 186 (LI), K267, G289, and Q298. A disulfide bridge connects residues C346 and C458. The Rhodanese domain maps to 406 to 485 (LAENEVILDI…FNNIKVYRQN (80 aa)). Catalysis depends on C458, which acts as the Cysteine persulfide intermediate.

This sequence belongs to the ThiI family.

The protein localises to the cytoplasm. The enzyme catalyses [ThiI sulfur-carrier protein]-S-sulfanyl-L-cysteine + a uridine in tRNA + 2 reduced [2Fe-2S]-[ferredoxin] + ATP + H(+) = [ThiI sulfur-carrier protein]-L-cysteine + a 4-thiouridine in tRNA + 2 oxidized [2Fe-2S]-[ferredoxin] + AMP + diphosphate. It carries out the reaction [ThiS sulfur-carrier protein]-C-terminal Gly-Gly-AMP + S-sulfanyl-L-cysteinyl-[cysteine desulfurase] + AH2 = [ThiS sulfur-carrier protein]-C-terminal-Gly-aminoethanethioate + L-cysteinyl-[cysteine desulfurase] + A + AMP + 2 H(+). It participates in cofactor biosynthesis; thiamine diphosphate biosynthesis. Catalyzes the ATP-dependent transfer of a sulfur to tRNA to produce 4-thiouridine in position 8 of tRNAs, which functions as a near-UV photosensor. Also catalyzes the transfer of sulfur to the sulfur carrier protein ThiS, forming ThiS-thiocarboxylate. This is a step in the synthesis of thiazole, in the thiamine biosynthesis pathway. The sulfur is donated as persulfide by IscS. The polypeptide is tRNA sulfurtransferase (Tolumonas auensis (strain DSM 9187 / NBRC 110442 / TA 4)).